Reading from the N-terminus, the 96-residue chain is UPF0235 protein PC1_3453 (96 aa).

It belongs to the UPF0235 family.

The chain is UPF0235 protein PC1_3453 from Pectobacterium carotovorum subsp. carotovorum (strain PC1).